The primary structure comprises 380 residues: Epoxyqueuosine reductase (380 aa).

The active-site Proton donor is the aspartate 139. Residues isoleucine 181–glutamine 213 form the 4Fe-4S ferredoxin-type 1 domain. [4Fe-4S] cluster is bound by residues cysteine 193, cysteine 196, cysteine 199, cysteine 203, cysteine 219, cysteine 245, cysteine 248, and cysteine 252. The region spanning tyrosine 234–aspartate 263 is the 4Fe-4S ferredoxin-type 2 domain.

Belongs to the QueG family. Monomer. Requires cob(II)alamin as cofactor. It depends on [4Fe-4S] cluster as a cofactor.

The protein localises to the cytoplasm. It catalyses the reaction epoxyqueuosine(34) in tRNA + AH2 = queuosine(34) in tRNA + A + H2O. The protein operates within tRNA modification; tRNA-queuosine biosynthesis. In terms of biological role, catalyzes the conversion of epoxyqueuosine (oQ) to queuosine (Q), which is a hypermodified base found in the wobble positions of tRNA(Asp), tRNA(Asn), tRNA(His) and tRNA(Tyr). The chain is Epoxyqueuosine reductase from Staphylococcus aureus (strain NCTC 8325 / PS 47).